The primary structure comprises 395 residues: Succinyl-diaminopimelate desuccinylase 2 (395 aa).

Histidine 79 provides a ligand contact to Zn(2+). Aspartate 81 is a catalytic residue. Zn(2+) is bound at residue aspartate 112. The active-site Proton acceptor is the glutamate 145. Residues glutamate 146, glutamate 174, and histidine 363 each contribute to the Zn(2+) site.

This sequence belongs to the peptidase M20A family. DapE subfamily. As to quaternary structure, homodimer. Requires Zn(2+) as cofactor. Co(2+) is required as a cofactor.

The enzyme catalyses N-succinyl-(2S,6S)-2,6-diaminopimelate + H2O = (2S,6S)-2,6-diaminopimelate + succinate. The protein operates within amino-acid biosynthesis; L-lysine biosynthesis via DAP pathway; LL-2,6-diaminopimelate from (S)-tetrahydrodipicolinate (succinylase route): step 3/3. In terms of biological role, catalyzes the hydrolysis of N-succinyl-L,L-diaminopimelic acid (SDAP), forming succinate and LL-2,6-diaminopimelate (DAP), an intermediate involved in the bacterial biosynthesis of lysine and meso-diaminopimelic acid, an essential component of bacterial cell walls. This Ruegeria sp. (strain TM1040) (Silicibacter sp.) protein is Succinyl-diaminopimelate desuccinylase 2.